A 249-amino-acid chain; its full sequence is Phosphate import ATP-binding protein PstB 2 (249 aa).

The region spanning phenylalanine 4–valine 244 is the ABC transporter domain. Glycine 36–serine 43 is an ATP binding site.

The protein belongs to the ABC transporter superfamily. Phosphate importer (TC 3.A.1.7) family. As to quaternary structure, the complex is composed of two ATP-binding proteins (PstB), two transmembrane proteins (PstC and PstA) and a solute-binding protein (PstS).

The protein localises to the cell inner membrane. The catalysed reaction is phosphate(out) + ATP + H2O = ADP + 2 phosphate(in) + H(+). In terms of biological role, part of the ABC transporter complex PstSACB involved in phosphate import. Responsible for energy coupling to the transport system. This chain is Phosphate import ATP-binding protein PstB 2, found in Vibrio vulnificus (strain CMCP6).